Here is a 451-residue protein sequence, read N- to C-terminus: Trigger factor (451 aa).

One can recognise a PPIase FKBP-type domain in the interval 165 to 250 (DDKLTIDFEG…LRQIQAREAL (86 aa)).

It belongs to the FKBP-type PPIase family. Tig subfamily.

Its subcellular location is the cytoplasm. The enzyme catalyses [protein]-peptidylproline (omega=180) = [protein]-peptidylproline (omega=0). Its function is as follows. Involved in protein export. Acts as a chaperone by maintaining the newly synthesized protein in an open conformation. Functions as a peptidyl-prolyl cis-trans isomerase. The sequence is that of Trigger factor from Helicobacter pylori (strain Shi470).